A 310-amino-acid polypeptide reads, in one-letter code: Protoheme IX farnesyltransferase (310 aa).

9 helical membrane passes run 31–51, 52–72, 102–119, 123–145, 151–171, 179–199, 225–245, 248–268, and 281–301; these read VMSL…DSIH, PLIA…AGAM, ALSF…FMAL, ILAS…IWLK, NIVI…AAVS, IILF…IALF, ILIY…IGMN, IYLI…FSLF, and FTYS…TSTI.

It belongs to the UbiA prenyltransferase family. Protoheme IX farnesyltransferase subfamily.

It is found in the cell inner membrane. It carries out the reaction heme b + (2E,6E)-farnesyl diphosphate + H2O = Fe(II)-heme o + diphosphate. Its pathway is porphyrin-containing compound metabolism; heme O biosynthesis; heme O from protoheme: step 1/1. Functionally, converts heme B (protoheme IX) to heme O by substitution of the vinyl group on carbon 2 of heme B porphyrin ring with a hydroxyethyl farnesyl side group. This is Protoheme IX farnesyltransferase from Rickettsia prowazekii (strain Madrid E).